Consider the following 158-residue polypeptide: MGRSRSRSPERRRERRRSRSASRERERRRRERSRSRERRRSRSRSPHRRRSRSPRRHRSSSISPSRLKDRRDDDKKEPKESKGGGSKERQLAAEDLEGKTEEEIEMMKLMGFASFDSSKGKKTDGSVNAYAINVSQKRKYRQYMNRKGGFNRPLDFVA.

Residues 1-102 are disordered; it reads MGRSRSRSPE…AEDLEGKTEE (102 aa). The segment covering 13–59 has biased composition (basic residues); sequence RERRRSRSASRERERRRRERSRSRERRRSRSRSPHRRRSRSPRRHRS. Basic and acidic residues predominate over residues 66-101; the sequence is RLKDRRDDDKKEPKESKGGGSKERQLAAEDLEGKTE.

The protein belongs to the SNUT3 family. Part of a tri-snRNP complex.

It localises to the nucleus. May play a role in mRNA splicing. This is U4/U6.U5 small nuclear ribonucleoprotein 27 kDa protein (snrnp27) from Xenopus laevis (African clawed frog).